The following is a 311-amino-acid chain: Glutamyl-Q tRNA(Asp) synthetase (311 aa).

L-glutamate-binding positions include 14–18 (RYAPS) and glutamate 50. A 'HIGH' region motif is present at residues 17–27 (PSPSGDLHLGN). Zn(2+)-binding residues include cysteine 104, cysteine 106, tyrosine 125, and cysteine 129. Residues tyrosine 186 and arginine 204 each contribute to the L-glutamate site. A 'KMSKS' region motif is present at residues 242-246 (RLAKR). Lysine 245 provides a ligand contact to ATP.

This sequence belongs to the class-I aminoacyl-tRNA synthetase family. GluQ subfamily. Zn(2+) serves as cofactor.

In terms of biological role, catalyzes the tRNA-independent activation of glutamate in presence of ATP and the subsequent transfer of glutamate onto a tRNA(Asp). Glutamate is transferred on the 2-amino-5-(4,5-dihydroxy-2-cyclopenten-1-yl) moiety of the queuosine in the wobble position of the QUC anticodon. The polypeptide is Glutamyl-Q tRNA(Asp) synthetase (Nocardia farcinica (strain IFM 10152)).